Reading from the N-terminus, the 300-residue chain is Dihydroorotate dehydrogenase B (NAD(+)), catalytic subunit (300 aa).

FMN contacts are provided by residues Ser20 and 44–45 (KG). Residues Lys44 and 68 to 72 (NSVGL) contribute to the substrate site. Positions 98 and 124 each coordinate FMN. Asn124 serves as a coordination point for substrate. The Nucleophile role is filled by Cys127. FMN-binding residues include Lys162 and Ile188. 189–190 (NT) contacts substrate. FMN contacts are provided by residues Gly214, 240-241 (GG), and 262-263 (GT).

Belongs to the dihydroorotate dehydrogenase family. Type 1 subfamily. Heterotetramer of 2 PyrK and 2 PyrD type B subunits. The cofactor is FMN.

It is found in the cytoplasm. It catalyses the reaction (S)-dihydroorotate + NAD(+) = orotate + NADH + H(+). It functions in the pathway pyrimidine metabolism; UMP biosynthesis via de novo pathway; orotate from (S)-dihydroorotate (NAD(+) route): step 1/1. In terms of biological role, catalyzes the conversion of dihydroorotate to orotate with NAD(+) as electron acceptor. This is Dihydroorotate dehydrogenase B (NAD(+)), catalytic subunit (pyrD) from Caldicellulosiruptor bescii (strain ATCC BAA-1888 / DSM 6725 / KCTC 15123 / Z-1320) (Anaerocellum thermophilum).